The chain runs to 414 residues: Esterase FrsA (414 aa).

It belongs to the FrsA family.

It catalyses the reaction a carboxylic ester + H2O = an alcohol + a carboxylate + H(+). In terms of biological role, catalyzes the hydrolysis of esters. This chain is Esterase FrsA, found in Klebsiella pneumoniae subsp. pneumoniae (strain ATCC 700721 / MGH 78578).